A 239-amino-acid chain; its full sequence is UPF0173 metal-dependent hydrolase DVU_3308 (239 aa).

The protein belongs to the UPF0173 family.

This is UPF0173 metal-dependent hydrolase DVU_3308 from Nitratidesulfovibrio vulgaris (strain ATCC 29579 / DSM 644 / CCUG 34227 / NCIMB 8303 / VKM B-1760 / Hildenborough) (Desulfovibrio vulgaris).